A 325-amino-acid chain; its full sequence is Tetraacyldisaccharide 4'-kinase (325 aa).

ATP is bound at residue 58–65 (TVGGSGKT).

Belongs to the LpxK family.

It catalyses the reaction a lipid A disaccharide + ATP = a lipid IVA + ADP + H(+). It functions in the pathway glycolipid biosynthesis; lipid IV(A) biosynthesis; lipid IV(A) from (3R)-3-hydroxytetradecanoyl-[acyl-carrier-protein] and UDP-N-acetyl-alpha-D-glucosamine: step 6/6. In terms of biological role, transfers the gamma-phosphate of ATP to the 4'-position of a tetraacyldisaccharide 1-phosphate intermediate (termed DS-1-P) to form tetraacyldisaccharide 1,4'-bis-phosphate (lipid IVA). The sequence is that of Tetraacyldisaccharide 4'-kinase from Coxiella burnetii (strain CbuG_Q212) (Coxiella burnetii (strain Q212)).